The following is a 62-amino-acid chain: Small ribosomal subunit protein eS27 (62 aa).

C17, C20, C36, and C39 together coordinate Zn(2+). Residues 17-39 form a C4-type zinc finger; sequence CPDCDNEQTVFSKASTTVKCVVC.

Belongs to the eukaryotic ribosomal protein eS27 family. Part of the 30S ribosomal subunit. The cofactor is Zn(2+).

In Methanoregula boonei (strain DSM 21154 / JCM 14090 / 6A8), this protein is Small ribosomal subunit protein eS27.